The primary structure comprises 224 residues: Abasic site processing protein YoqW (224 aa).

Catalysis depends on Cys-2, which acts as the Nucleophile. Cys-2 is subject to Thiazolidine linkage to a ring-opened DNA abasic site. The active site involves Glu-106.

The protein belongs to the SOS response-associated peptidase family.

With respect to regulation, formation and reversal of DNA-protein cross-link depends on DNA context. Catalyzes formation of the thiazolidine linkage in presence of abasic sites in single-stranded DNA. Mediates the reversal of the thiazolidine cross-link in presence of double stranded DNA. Functionally, sensor of abasic sites in single-stranded DNA (ssDNA) required to preserve genome integrity by promoting error-free repair of abasic sites. Recognizes and binds abasic sites in ssDNA at replication forks and chemically modifies the lesion by forming a covalent cross-link with DNA: forms a stable thiazolidine linkage between a ring-opened abasic site and the alpha-amino and sulfhydryl substituents of its N-terminal catalytic cysteine residue. The DNA-protein cross-link is then reversed: able to catalyze the reversal of the thiazolidine cross-link and cycle between a cross-link and a non-cross-linked state depending on DNA context: mediates self-reversal of the thiazolidine cross-link in double stranded DNA. May act as a protease: mediates autocatalytic processing of its N-terminal methionine in order to expose the catalytic cysteine. This is Abasic site processing protein YoqW (yoqW) from Bacillus subtilis (strain 168).